An 845-amino-acid chain; its full sequence is uncharacterized protein (845 aa).

Residues 224 to 241 (SNNIPTGIQDSSKYTVNG) are compositionally biased toward polar residues. Disordered stretches follow at residues 224–244 (SNNI…GPTE), 324–346 (QGTE…ANNG), 383–434 (RTAN…EGSA), 456–485 (VKAS…ATLN), 519–619 (NMTL…PKNS), 674–701 (VVSR…DSSP), and 739–785 (RKST…ANKS). Basic and acidic residues predominate over residues 390–399 (PTKKSNRSEQ). The segment covering 400–422 (SKTVANTNVGSKNGTTPRSFAQK) has biased composition (polar residues). The segment covering 534–546 (NSWRSKYLSEGKN) has biased composition (basic and acidic residues). Over residues 563-576 (SSLASPTKSSASPL) the composition is skewed to low complexity. The residue at position 567 (S567) is a Phosphoserine. Basic and acidic residues-rich tracts occupy residues 579 to 588 (APKETPERLC) and 600 to 614 (ANLK…KSDI). Polar residues-rich tracts occupy residues 674–683 (VVSRTVTSPK), 691–701 (SKASYNQDSSP), and 743–760 (ADSL…TPKA).

It localises to the mitochondrion. This is an uncharacterized protein from Schizosaccharomyces pombe (strain 972 / ATCC 24843) (Fission yeast).